The sequence spans 196 residues: Probable malonic semialdehyde reductase RutE (196 aa).

This sequence belongs to the nitroreductase family. HadB/RutE subfamily. FMN serves as cofactor.

The catalysed reaction is 3-hydroxypropanoate + NADP(+) = 3-oxopropanoate + NADPH + H(+). Functionally, may reduce toxic product malonic semialdehyde to 3-hydroxypropionic acid, which is excreted. In Shigella sonnei (strain Ss046), this protein is Probable malonic semialdehyde reductase RutE.